Reading from the N-terminus, the 88-residue chain is Phosphocarrier protein HPr (88 aa).

The HPr domain maps to Met-1 to Glu-88. The active-site Pros-phosphohistidine intermediate is the His-15. A Phosphoserine; by HPrK/P modification is found at Ser-46.

The protein belongs to the HPr family.

It localises to the cytoplasm. Its activity is regulated as follows. Phosphorylation on Ser-46 inhibits the phosphoryl transfer from enzyme I to HPr. General (non sugar-specific) component of the phosphoenolpyruvate-dependent sugar phosphotransferase system (sugar PTS). This major carbohydrate active-transport system catalyzes the phosphorylation of incoming sugar substrates concomitantly with their translocation across the cell membrane. The phosphoryl group from phosphoenolpyruvate (PEP) is transferred to the phosphoryl carrier protein HPr by enzyme I. Phospho-HPr then transfers it to the PTS EIIA domain. Its function is as follows. P-Ser-HPr interacts with the catabolite control protein A (CcpA), forming a complex that binds to DNA at the catabolite response elements cre, operator sites preceding a large number of catabolite-regulated genes. Thus, P-Ser-HPr is a corepressor in carbon catabolite repression (CCR), a mechanism that allows bacteria to coordinate and optimize the utilization of available carbon sources. P-Ser-HPr also plays a role in inducer exclusion, in which it probably interacts with several non-PTS permeases and inhibits their transport activity. This chain is Phosphocarrier protein HPr (ptsH), found in Staphylococcus carnosus.